Consider the following 236-residue polypeptide: 15,16-dihydrobiliverdin:ferredoxin oxidoreductase (236 aa).

The protein belongs to the HY2 family.

It catalyses the reaction 15,16-dihydrobiliverdin + oxidized 2[4Fe-4S]-[ferredoxin] = biliverdin IXalpha + reduced 2[4Fe-4S]-[ferredoxin] + 2 H(+). Its function is as follows. Catalyzes the two-electron reduction of biliverdin IX-alpha at the C15 methine bridge. This is 15,16-dihydrobiliverdin:ferredoxin oxidoreductase from Prochlorococcus marinus (strain MIT 9515).